The chain runs to 172 residues: Centrin-2 (172 aa).

The disordered stretch occupies residues 1–31 (MASNFKKANMASTTQRKRMSPKPELTEEQKQ). A2 carries the post-translational modification N-acetylalanine. The interval 2-25 (ASNFKKANMASTTQRKRMSPKPEL) is required for self-assembly. At S20 the chain carries Phosphoserine. K22 participates in a covalent cross-link: Glycyl lysine isopeptide (Lys-Gly) (interchain with G-Cter in SUMO2). T26 carries the post-translational modification Phosphothreonine. EF-hand domains lie at 28-63 (EQKQ…LGFE), 64-99 (PKKE…KMSE), 101-136 (DTKE…LGEN), and 137-172 (LSDE…TSLY). Residues D41, D43, T45, T47, and E52 each coordinate Ca(2+). Ca(2+) is bound by residues D150, D152, D154, E156, and E161.

Belongs to the centrin family. Monomer. Homooligomer. Interacts with CCP110, SFI1. Component of the XPC complex composed of XPC, RAD23B and CETN2. Component of the nuclear pore complex (NPC)-associated TREX-2 complex (transcription and export complex 2), composed of at least GANP, 2 copies of ENY2, PCID2, SEM1/DSS1, and either centrin CETN2 or centrin CETN3. The TREX-2 complex also associates with ALYREF/ALY and with the nucleoporin NUP153. Interacts with USP49. Forms a microtubule-associated complex with POC5, POC1B and FAM161A. Interacts with CCDC15.

The protein resides in the cytoplasm. Its subcellular location is the cytoskeleton. The protein localises to the microtubule organizing center. It localises to the centrosome. It is found in the centriole. The protein resides in the nucleus. Its subcellular location is the nucleus envelope. The protein localises to the nuclear pore complex. Its function is as follows. Plays a fundamental role in microtubule organizing center structure and function. Required for centriole duplication and correct spindle formation. Has a role in regulating cytokinesis and genome stability via cooperation with CALM1 and CCP110. Involved in global genome nucleotide excision repair (GG-NER) by acting as component of the XPC complex. Cooperatively with RAD23B appears to stabilize XPC. In vitro, stimulates DNA binding of the XPC:RAD23B dimer. In terms of biological role, the XPC complex is proposed to represent the first factor bound at the sites of DNA damage and together with other core recognition factors, XPA, RPA and the TFIIH complex, is part of the pre-incision (or initial recognition) complex. The XPC complex recognizes a wide spectrum of damaged DNA characterized by distortions of the DNA helix such as single-stranded loops, mismatched bubbles or single-stranded overhangs. The orientation of XPC complex binding appears to be crucial for inducing a productive NER. XPC complex is proposed to recognize and to interact with unpaired bases on the undamaged DNA strand which is followed by recruitment of the TFIIH complex and subsequent scanning for lesions in the opposite strand in a 5'-to-3' direction by the NER machinery. Cyclobutane pyrimidine dimers (CPDs) which are formed upon UV-induced DNA damage esacpe detection by the XPC complex due to a low degree of structural perurbation. Instead they are detected by the UV-DDB complex which in turn recruits and cooperates with the XPC complex in the respective DNA repair. Functionally, as a component of the TREX-2 complex, involved in the export of mRNAs to the cytoplasm through the nuclear pores. This chain is Centrin-2 (CETN2), found in Bos taurus (Bovine).